Consider the following 621-residue polypeptide: Phosphoenolpyruvate carboxykinase [GTP] (621 aa).

Substrate contacts are provided by residues Arg-82 and 220–222; that span reads YGG. Residues Lys-229 and His-249 each contribute to the Mn(2+) site. Ser-271 contacts substrate. 272–277 provides a ligand contact to GTP; it reads QCGKTN. Residue Cys-273 is part of the active site. Asp-296 contributes to the Mn(2+) binding site. 386-388 contacts substrate; the sequence is NSR. GTP-binding positions include Arg-388, Arg-419, and 514–517; that span reads FGEN.

It belongs to the phosphoenolpyruvate carboxykinase [GTP] family. In terms of assembly, monomer. Requires Mn(2+) as cofactor.

Its subcellular location is the cytoplasm. The catalysed reaction is oxaloacetate + GTP = phosphoenolpyruvate + GDP + CO2. Its pathway is carbohydrate biosynthesis; gluconeogenesis. In terms of biological role, catalyzes the conversion of oxaloacetate (OAA) to phosphoenolpyruvate (PEP), the rate-limiting step in the metabolic pathway that produces glucose from lactate and other precursors derived from the citric acid cycle. This is Phosphoenolpyruvate carboxykinase [GTP] from Corynebacterium kroppenstedtii (strain DSM 44385 / JCM 11950 / CIP 105744 / CCUG 35717).